A 383-amino-acid chain; its full sequence is MNIHEYQAKEVLHKFNVSVPKGFVATSAEEVKTQVSQLKSDVFVVKAQIHAGGRGKAGGVKLAKSAEEAQQFVKDMIGMTLVTHQTGPSGQQVRKVYVEEGSSIKKEYYLSLVIDPKLSRPIFIFSSEGGMDIEEVAKNSPAKIVKFDIDSATSFDSSKLSSSFHLSPEQIEKITNVAKNIYDAFIATDASQIEINPLVETSSGDFIALDAKINFDDNALYRHPEIMELRDYDEEVKEEIEASKYGLSYIKMDGSIGCMVNGAGLAMATMDIIKYYGAEPANFLDVGGGASKETVTEAFKIILSDSNVKGILVNIFGGIMRCDIIASGIVAAAKEMSIKVPLVVRLSGTNFEEGKKILEESGLNIIAADELGDAAQKIVKEVK.

The region spanning 9-241 (KEVLHKFNVS…YDEEVKEEIE (233 aa)) is the ATP-grasp domain. Residues Lys46, 53–55 (GRG), Glu99, Ser102, and Glu107 each bind ATP. 2 residues coordinate Mg(2+): Asn196 and Asp210. Residues Asn261 and 318–320 (GIM) each bind substrate.

This sequence belongs to the succinate/malate CoA ligase beta subunit family. Heterotetramer of two alpha and two beta subunits. Requires Mg(2+) as cofactor.

It catalyses the reaction succinate + ATP + CoA = succinyl-CoA + ADP + phosphate. The catalysed reaction is GTP + succinate + CoA = succinyl-CoA + GDP + phosphate. Its pathway is carbohydrate metabolism; tricarboxylic acid cycle; succinate from succinyl-CoA (ligase route): step 1/1. Succinyl-CoA synthetase functions in the citric acid cycle (TCA), coupling the hydrolysis of succinyl-CoA to the synthesis of either ATP or GTP and thus represents the only step of substrate-level phosphorylation in the TCA. The beta subunit provides nucleotide specificity of the enzyme and binds the substrate succinate, while the binding sites for coenzyme A and phosphate are found in the alpha subunit. The polypeptide is Succinate--CoA ligase [ADP-forming] subunit beta (Wolbachia sp. subsp. Drosophila simulans (strain wRi)).